The following is a 354-amino-acid chain: Serine/threonine-protein kinase ppk34 (354 aa).

A Protein kinase domain is found at 40-331; sequence YRLKNMLGYG…IEELLRDPFL (292 aa). Residues 46–54 and K69 contribute to the ATP site; that span reads LGYGACSTV. D200 serves as the catalytic Proton acceptor.

The protein belongs to the protein kinase superfamily. Ser/Thr protein kinase family.

Its subcellular location is the cytoplasm. It localises to the nucleus. It carries out the reaction L-seryl-[protein] + ATP = O-phospho-L-seryl-[protein] + ADP + H(+). It catalyses the reaction L-threonyl-[protein] + ATP = O-phospho-L-threonyl-[protein] + ADP + H(+). The protein is Serine/threonine-protein kinase ppk34 (ppk34) of Schizosaccharomyces pombe (strain 972 / ATCC 24843) (Fission yeast).